A 367-amino-acid chain; its full sequence is Anhydro-N-acetylmuramic acid kinase (367 aa).

11–18 serves as a coordination point for ATP; sequence GTSLDGVD.

The protein belongs to the anhydro-N-acetylmuramic acid kinase family.

The catalysed reaction is 1,6-anhydro-N-acetyl-beta-muramate + ATP + H2O = N-acetyl-D-muramate 6-phosphate + ADP + H(+). It functions in the pathway amino-sugar metabolism; 1,6-anhydro-N-acetylmuramate degradation. Its pathway is cell wall biogenesis; peptidoglycan recycling. Functionally, catalyzes the specific phosphorylation of 1,6-anhydro-N-acetylmuramic acid (anhMurNAc) with the simultaneous cleavage of the 1,6-anhydro ring, generating MurNAc-6-P. Is required for the utilization of anhMurNAc either imported from the medium or derived from its own cell wall murein, and thus plays a role in cell wall recycling. The protein is Anhydro-N-acetylmuramic acid kinase of Chromobacterium violaceum (strain ATCC 12472 / DSM 30191 / JCM 1249 / CCUG 213 / NBRC 12614 / NCIMB 9131 / NCTC 9757 / MK).